Consider the following 26-residue polypeptide: Thrombin-like enzyme LmrSP-3 (26 aa).

This sequence belongs to the peptidase S1 family. Snake venom subfamily. Expressed by the venom gland.

It localises to the secreted. In terms of biological role, thrombin-like snake venom serine protease that cleaves alpha-chain of fibrinogen (FGA) releases only fibrinopeptide A. Shows coagulant, esterase and amidase activities. The protein is Thrombin-like enzyme LmrSP-3 of Lachesis muta rhombeata (Bushmaster).